The primary structure comprises 456 residues: NADPH-ferredoxin reductase FprA (456 aa).

Positions 14, 40, 48, and 84 each coordinate FAD. NADP(+)-binding positions include R110, 155–158 (NGNV), 199–200 (RR), and E211. Residues W359 and 366 to 368 (GVI) each bind FAD. G366 is an NADP(+) binding site.

The protein belongs to the ferredoxin--NADP reductase type 1 family. Monomer. FAD serves as cofactor.

It carries out the reaction 2 reduced [2Fe-2S]-[ferredoxin] + NADP(+) + H(+) = 2 oxidized [2Fe-2S]-[ferredoxin] + NADPH. Its function is as follows. May serve as electron transfer protein and supply electrons to P450 systems. In Mycobacterium tuberculosis (strain CDC 1551 / Oshkosh), this protein is NADPH-ferredoxin reductase FprA (fprA).